The sequence spans 554 residues: HMG box-containing protein 4 (554 aa).

Disordered regions lie at residues 14 to 34, 47 to 368, and 418 to 468; these read RGME…KRSY, QVRK…SAYQ, and HKQN…SPAK. Residues 117-127 show a composition bias toward polar residues; the sequence is TSPQVDTSTTH. The span at 221-230 shows a compositional bias: basic and acidic residues; the sequence is TGREETESRS. Over residues 242-255 the composition is skewed to polar residues; the sequence is PRSGGTPDSASSTG. Residues 272–300 show a composition bias toward basic residues; the sequence is MKKKKKSKKSKKKKDKHKDEKHRKHSKSK. Over residues 317–335 the composition is skewed to pro residues; it reads LPSPPPPTATTPTSPPSVP. Positions 342 to 358 are enriched in basic and acidic residues; that stretch reads HAEEQLDKKKKKEDPEK. Residues 360 to 428 constitute a DNA-binding region (HMG box); the sequence is KKKNMSAYQV…KQNKAEATTV (69 aa). The segment covering 434 to 466 has biased composition (low complexity); it reads SSESAARSKGSSSGLPSPNKKSPTSVVSFSTSP.

As to quaternary structure, interacts with nlk.2.

It is found in the nucleus. In terms of biological role, negatively regulates Wnt/beta-catenin signaling during development. In Xenopus tropicalis (Western clawed frog), this protein is HMG box-containing protein 4 (hmgxb4).